Reading from the N-terminus, the 57-residue chain is Cold shock protein CspB (57 aa).

The CSD domain maps to 1–57; that stretch reads IKWFNSEKGFGFIEVEGQDDVFVHFSAIQGEGFKCLEEGQAVSFEIVEGNRGPQAAN.

Homodimer.

The protein resides in the cytoplasm. In terms of biological role, affects cell viability at low temperatures. The sequence is that of Cold shock protein CspB (cspB) from Sporosarcina globispora (Bacillus globisporus).